The chain runs to 327 residues: L-lactate dehydrogenase 1 (327 aa).

NAD(+)-binding positions include Val21, Asp42, Lys47, Tyr72, and 86–87; that span reads GA. Residues Gln89, Arg95, and 127-130 each bind substrate; that span reads NPVD. NAD(+) is bound by residues 125–127 and Ser150; that span reads AAN. 155-158 lines the substrate pocket; the sequence is DSAR. Residues Arg160 and His175 each contribute to the beta-D-fructose 1,6-bisphosphate site. The Proton acceptor role is filled by His182. Tyr227 carries the phosphotyrosine modification. Position 236 (Thr236) interacts with substrate.

It belongs to the LDH/MDH superfamily. LDH family. Homotetramer.

It localises to the cytoplasm. It catalyses the reaction (S)-lactate + NAD(+) = pyruvate + NADH + H(+). It participates in fermentation; pyruvate fermentation to lactate; (S)-lactate from pyruvate: step 1/1. Its activity is regulated as follows. Allosterically activated by fructose 1,6-bisphosphate (FBP). Catalyzes the conversion of lactate to pyruvate. This Enterococcus faecalis (strain ATCC 700802 / V583) protein is L-lactate dehydrogenase 1.